We begin with the raw amino-acid sequence, 104 residues long: Ycf49-like protein (104 aa).

3 helical membrane passes run 6 to 26 (IPTW…IALV), 41 to 61 (LAWG…WHFF), and 73 to 93 (LQAL…WWIY).

Belongs to the ycf49 family.

It localises to the cell membrane. In Synechocystis sp. (strain ATCC 27184 / PCC 6803 / Kazusa), this protein is Ycf49-like protein.